The sequence spans 241 residues: Chaperone protein FimC (241 aa).

The N-terminal stretch at 1-36 is a signal peptide; the sequence is MSNKNVNVRKSQEITFCLLAGILMFMAMVVAGRAEA.

Belongs to the periplasmic pilus chaperone family.

It localises to the periplasm. Its function is as follows. Required for the biogenesis of type 1 fimbriae. Binds and interact with FimH. This is Chaperone protein FimC (fimC) from Escherichia coli O6:H1 (strain CFT073 / ATCC 700928 / UPEC).